The chain runs to 252 residues: Ribosomal RNA small subunit methyltransferase J (252 aa).

S-adenosyl-L-methionine-binding positions include 126 to 127 and aspartate 176; that span reads ER.

The protein belongs to the methyltransferase superfamily. RsmJ family.

It localises to the cytoplasm. The catalysed reaction is guanosine(1516) in 16S rRNA + S-adenosyl-L-methionine = N(2)-methylguanosine(1516) in 16S rRNA + S-adenosyl-L-homocysteine + H(+). Specifically methylates the guanosine in position 1516 of 16S rRNA. The chain is Ribosomal RNA small subunit methyltransferase J from Bdellovibrio bacteriovorus (strain ATCC 15356 / DSM 50701 / NCIMB 9529 / HD100).